The following is a 428-amino-acid chain: Probable G-protein coupled receptor (428 aa).

Topologically, residues 1–46 are extracellular; sequence MMADKTSPMITSDHSISNFSTGLFGPHPTVPPDVGVVTSSQSQMKD. N18 carries an N-linked (GlcNAc...) asparagine glycan. The chain crosses the membrane as a helical span at residues 47-67; it reads LFGLFCMVTLNLIALLANTGV. The Cytoplasmic segment spans residues 68–93; it reads MVAIARAPHLKKFAFVCHLCAVDVLC. Residues 94 to 114 traverse the membrane as a helical segment; that stretch reads AILLMPLGIISSSPFFGTVVF. Over 115-120 the chain is Extracellular; that stretch reads TILECQ. A helical transmembrane segment spans residues 121–141; sequence VYIFLNVFLIWLSILTITAIS. Residues 142-162 are Cytoplasmic-facing; that stretch reads VERYFYIVHPMRYEVKMTINL. A helical membrane pass occupies residues 163–183; it reads VIGVMLLIWFKSLLLALVTLF. Residues 184-210 are Extracellular-facing; that stretch reads GWPPYGHQSSIAASHCSLHASHSRLRG. Residues 211-231 traverse the membrane as a helical segment; it reads VFAVLFCVICFLAPVVVIFSV. Topologically, residues 232–293 are cytoplasmic; the sequence is YSAVYKVARS…PERAFSGGKA (62 aa). A helical transmembrane segment spans residues 294-314; it reads ALTLAFIVGQFLVCWLPFFIF. Residues 315 to 428 lie on the Extracellular side of the membrane; sequence HLQMSLTGSM…IPGQIPEEQA (114 aa). Over residues 398 to 414 the composition is skewed to polar residues; it reads SETHPSFANSNPRNMEN. Positions 398–428 are disordered; sequence SETHPSFANSNPRNMENQAHKIPGQIPEEQA.

The protein belongs to the G-protein coupled receptor 1 family.

The protein resides in the cell membrane. This is Probable G-protein coupled receptor from Oryzias latipes (Japanese rice fish).